Reading from the N-terminus, the 111-residue chain is MNWRVVDSVVSTDTNSVFTLISSQQSFKLILWYKATFYLSSGDTLSINGASITVNNHPVELTLYRTTVYNARFWQTIVNSNTHCAGNHRQSVGRCGYRRKCKLLYCPFQKH.

It belongs to the IraM/RssC family.

The protein resides in the cytoplasm. Its function is as follows. Involved in the stabilization of the sigma stress factor RpoS. The chain is Anti-adapter protein IraM from Cronobacter sakazakii (strain ATCC BAA-894) (Enterobacter sakazakii).